Consider the following 364-residue polypeptide: Formate dehydrogenase (364 aa).

Val93 and Asn119 together coordinate substrate. Residues Arg174 to Ile175, Asp195, Pro230 to Gly234, Thr256, Asp282, and His311 to Gly314 contribute to the NAD(+) site.

It belongs to the D-isomer specific 2-hydroxyacid dehydrogenase family. FDH subfamily. In terms of assembly, homodimer.

It localises to the cytoplasm. It carries out the reaction formate + NAD(+) = CO2 + NADH. Its activity is regulated as follows. Cu(2+), Hg and p-chloromercuribenzoate are strong inhibitors of enzyme activity and Ca(2+), Mg(2+), Zn(2+), Mn(2+), Cd(2+) and Sn(2+) have no effect on activity indicating a cysteine residue in the protein is essential for enzyme activity or to maintain the proper structure of the enzyme. Nitrite and nitrate inhibit some enzyme activity, however cyanide, azide, thiocyanate and cyanate are strong inhibitors of the enzymatic reaction. The inhibition of cyanide is competitive with formate and reversible. Its function is as follows. Catalyzes the NAD(+)-dependent oxidation of formate to carbon dioxide. Formate oxidation is the final step in the methanol oxidation pathway in methylotrophic microorganisms. Has a role in the detoxification of exogenous formate in non-methylotrophic organisms. This chain is Formate dehydrogenase, found in Candida boidinii (Yeast).